Consider the following 145-residue polypeptide: uncharacterized protein (145 aa).

This is an uncharacterized protein from Rhizobium radiobacter (Agrobacterium tumefaciens).